The primary structure comprises 729 residues: Fatty acid oxidation complex subunit alpha (729 aa).

The enoyl-CoA hydratase/isomerase stretch occupies residues 1–189; sequence MLYKGDTLYL…KIGLVDGVVK (189 aa). Residue D296 participates in substrate binding. A 3-hydroxyacyl-CoA dehydrogenase region spans residues 311–729; the sequence is ETPKQAAVLG…ARPVGSLKTA (419 aa). Residues M324, D343, 400–402, K407, and S429 each bind NAD(+); that span reads VVE. The For 3-hydroxyacyl-CoA dehydrogenase activity role is filled by H450. N453 serves as a coordination point for NAD(+). Substrate contacts are provided by N500 and Y660. The tract at residues 708-729 is disordered; sequence RHNEPYYPPVEPARPVGSLKTA.

The protein in the N-terminal section; belongs to the enoyl-CoA hydratase/isomerase family. It in the C-terminal section; belongs to the 3-hydroxyacyl-CoA dehydrogenase family. In terms of assembly, heterotetramer of two alpha chains (FadB) and two beta chains (FadA).

The enzyme catalyses a (3S)-3-hydroxyacyl-CoA + NAD(+) = a 3-oxoacyl-CoA + NADH + H(+). It carries out the reaction a (3S)-3-hydroxyacyl-CoA = a (2E)-enoyl-CoA + H2O. It catalyses the reaction a 4-saturated-(3S)-3-hydroxyacyl-CoA = a (3E)-enoyl-CoA + H2O. The catalysed reaction is (3S)-3-hydroxybutanoyl-CoA = (3R)-3-hydroxybutanoyl-CoA. The enzyme catalyses a (3Z)-enoyl-CoA = a 4-saturated (2E)-enoyl-CoA. It carries out the reaction a (3E)-enoyl-CoA = a 4-saturated (2E)-enoyl-CoA. The protein operates within lipid metabolism; fatty acid beta-oxidation. Functionally, involved in the aerobic and anaerobic degradation of long-chain fatty acids via beta-oxidation cycle. Catalyzes the formation of 3-oxoacyl-CoA from enoyl-CoA via L-3-hydroxyacyl-CoA. It can also use D-3-hydroxyacyl-CoA and cis-3-enoyl-CoA as substrate. In Salmonella newport (strain SL254), this protein is Fatty acid oxidation complex subunit alpha.